We begin with the raw amino-acid sequence, 368 residues long: Cobalt-precorrin-5B C(1)-methyltransferase (368 aa).

Belongs to the CbiD family.

The enzyme catalyses Co-precorrin-5B + S-adenosyl-L-methionine = Co-precorrin-6A + S-adenosyl-L-homocysteine. It participates in cofactor biosynthesis; adenosylcobalamin biosynthesis; cob(II)yrinate a,c-diamide from sirohydrochlorin (anaerobic route): step 6/10. Its function is as follows. Catalyzes the methylation of C-1 in cobalt-precorrin-5B to form cobalt-precorrin-6A. The polypeptide is Cobalt-precorrin-5B C(1)-methyltransferase (Brucella ovis (strain ATCC 25840 / 63/290 / NCTC 10512)).